The sequence spans 224 residues: Orotate phosphoribosyltransferase (224 aa).

Residue Lys29 coordinates 5-phospho-alpha-D-ribose 1-diphosphate. 37-38 serves as a coordination point for orotate; sequence FF. 5-phospho-alpha-D-ribose 1-diphosphate-binding positions include 75-76, Arg105, Lys106, Lys109, His111, and 130-138; these read YK and DDVITAGTS. The orotate site is built by Thr134 and Arg162.

The protein belongs to the purine/pyrimidine phosphoribosyltransferase family. PyrE subfamily. Homodimer. The cofactor is Mg(2+).

The catalysed reaction is orotidine 5'-phosphate + diphosphate = orotate + 5-phospho-alpha-D-ribose 1-diphosphate. The protein operates within pyrimidine metabolism; UMP biosynthesis via de novo pathway; UMP from orotate: step 1/2. Its function is as follows. Catalyzes the transfer of a ribosyl phosphate group from 5-phosphoribose 1-diphosphate to orotate, leading to the formation of orotidine monophosphate (OMP). The sequence is that of Orotate phosphoribosyltransferase from Bordetella bronchiseptica (strain ATCC BAA-588 / NCTC 13252 / RB50) (Alcaligenes bronchisepticus).